The primary structure comprises 473 residues: Lactococcin A secretion protein LcnD-like (473 aa).

Residues 1 to 21 (MFDKKLLESSELYDKRYRNFS) lie on the Cytoplasmic side of the membrane. Residues 22–44 (TLIILPLFILLVGGVIFTFFAHK) traverse the membrane as a helical segment. At 45 to 473 (ELTVISTGSI…FLDKIMGRTS (429 aa)) the chain is on the extracellular side.

Belongs to the membrane fusion protein (MFP) (TC 8.A.1) family.

Its subcellular location is the cell membrane. Its function is as follows. Involved in the secretion of a lactococcin. The protein is Lactococcin A secretion protein LcnD-like (lcnD) of Lactococcus lactis subsp. lactis (strain IL1403) (Streptococcus lactis).